The sequence spans 1058 residues: MWHYTSINNDTRVALDPKPNQIRTITKPNTVPQLGTDYLYTFNPQRRSHTLRLLGPFQYFNFSETDRGHPLFRLPLKYPSKTIPTDELVDNLHSWMRSVHLLHTRSDDNSLRYNWMLGVYARSTNYTTPVGQLVVKTPAILNYANPQDAFNSVFIALGIDYIDIPITNSNIFDDGSTPYNVRIWHAPTMTEVNHILTLMRKSTLVSTHSSWHWNVLHTFHYRSESDMIDHFSAKILEDWRQKEKFDKGALVEADRVIQRLIPLSSSTYVQRLAAIGALYPNEFTENVLDLSRLSTALLQLSDTYYQHANDQLKRLYRRMYNDSRTLYMTARHQELLLAQVAANPNILLYPYTHIFTTAHITASYISNTGQGRIKHSLAVTGTTEHSTVPDIILGPTSEDVITISMVEPMSIAAEDMYGYVIDTPTRDIWPADEQVEQKGDAVALYDTKTSRALGMFNNTVRIDDLLSPLLGRVYRTYAKGDTMAMTQGSLDHQTLCAAVDSDITFVGNRMIAPLAEGYVPRAMHRNNSTMKMLSLYVAIKKLENFAANSYLMSPDTSIILLGAEREPAVNILRRFNSSVSNVRIIGMGDRAVEPNIRVRVPFPIDKNISADFVICDINSYEDQSFESMFGETMSVVTTCASAATRSLVKINHPSEYMINSVIERLSKLGGVFYHTALLKTASQNTYSYETYIYITPIAAAVGFLFYNNSAIINRYMTAVADDEAPVIPSIHTIIKEHSNTYSPGLFCGCIDVQSAPLALSQLKSYCSEATTWRVDSDDNLVNIIARIDPARIALEFRTRSNTSAHHEYQRCVPNGLGFKIRKTREFRYMHREVTFIHKLMMYALIREQISLTESMTQVVSIGGRNLADISVVPLTMKYIVIDPAARIETLTQEKKNIEIQARAFQFDASTMDLENNSIYLFIAVIMNEPNGAATPAQTQIDKIRNVATAMLTRTNCVAYISFYESGIITRLSQSTAHKTIRVEDGRLKVANYVPVDTLPEADVTLMLRDIGITYEIIRPSTPELVNACSSYGIRLGSTGGAVLDVFNHYSPVIKLVRS.

Belongs to the orthoreovirus lambda-2 protein family.

It is found in the virion. The enzyme catalyses a 5'-end diphospho-ribonucleoside in mRNA + GTP + H(+) = a 5'-end (5'-triphosphoguanosine)-ribonucleoside in mRNA + diphosphate. The catalysed reaction is a 5'-end (5'-triphosphoguanosine)-ribonucleoside in mRNA + S-adenosyl-L-methionine = a 5'-end (N(7)-methyl 5'-triphosphoguanosine)-ribonucleoside in mRNA + S-adenosyl-L-homocysteine. Functionally, outer capsid protein involved in mRNA capping. Catalyzes the last 3 enzymatic activities for formation of the 5' cap structure on the viral plus-strand transcripts, namely the RNA guanylyltransferase, RNA-7N- and RNA-2'O-methyltransferase activities. In Lymantria dispar cypovirus 1 (isolate Rao) (LdCPV-1), this protein is Outer capsid protein VP4 (S4).